Here is a 930-residue protein sequence, read N- to C-terminus: Carnosine synthase 1 (930 aa).

The tract at residues 1–24 (MISVDRLSEEQALGMKEQEWAGPE) is disordered. Residues 624–825 (RPPPAAFSVP…LLLAAVLLAL (202 aa)) enclose the ATP-grasp domain. 650–716 (VPFPAVAKLE…MEYVPGTEHD (67 aa)) is an ATP binding site. 3 residues coordinate Mg(2+): glutamate 782, glutamate 794, and asparagine 796. Positions 782, 794, and 796 each coordinate Mn(2+).

Homotetramer. Requires Mg(2+) as cofactor. Mn(2+) serves as cofactor.

It catalyses the reaction beta-alanine + L-histidine + ATP = carnosine + ADP + phosphate + H(+). The enzyme catalyses 4-aminobutanoate + L-histidine + ATP = L-homocarnosine + ADP + phosphate + H(+). Catalyzes the synthesis of carnosine and homocarnosine. Carnosine is synthesized more efficiently than homocarnosine. The chain is Carnosine synthase 1 from Gallus gallus (Chicken).